A 1414-amino-acid chain; its full sequence is DNA-directed RNA polymerase subunit beta' (1414 aa).

Positions 70, 72, 85, and 88 each coordinate Zn(2+). Residues D460, D462, and D464 each coordinate Mg(2+). Zn(2+)-binding residues include C814, C888, C895, and C898. The tract at residues 1378–1414 (EREAARQLANPFEDAPVTVGGEPEAPAADTPSDDSAE) is disordered.

Belongs to the RNA polymerase beta' chain family. The RNAP catalytic core consists of 2 alpha, 1 beta, 1 beta' and 1 omega subunit. When a sigma factor is associated with the core the holoenzyme is formed, which can initiate transcription. Mg(2+) is required as a cofactor. Requires Zn(2+) as cofactor.

It carries out the reaction RNA(n) + a ribonucleoside 5'-triphosphate = RNA(n+1) + diphosphate. In terms of biological role, DNA-dependent RNA polymerase catalyzes the transcription of DNA into RNA using the four ribonucleoside triphosphates as substrates. The chain is DNA-directed RNA polymerase subunit beta' from Bordetella bronchiseptica (strain ATCC BAA-588 / NCTC 13252 / RB50) (Alcaligenes bronchisepticus).